Consider the following 501-residue polypeptide: Raftlin-2 (501 aa).

Disordered stretches follow at residues 1–20 and 196–238; these read MGCG…GKIF and SWNE…SRKG. A lipid anchor (N-myristoyl glycine) is attached at Gly-2. Residue Cys-3 is the site of S-palmitoyl cysteine attachment. Polar residues predominate over residues 224–233; that stretch reads MEQNGSPSSS. Ser-405 carries the post-translational modification Phosphoserine. The tract at residues 407–454 is disordered; the sequence is AQTTDKKASRRIKGEDKNKATSRSIGLDTTTPQPAESRHPPEECRLSP. A Phosphothreonine modification is found at Thr-409. A compositionally biased stretch (basic and acidic residues) spans 410–425; that stretch reads TDKKASRRIKGEDKNK. Residues 427-440 are compositionally biased toward polar residues; that stretch reads TSRSIGLDTTTPQP. Phosphoserine is present on Ser-430. The span at 442–451 shows a compositional bias: basic and acidic residues; the sequence is ESRHPPEECR.

Belongs to the raftlin family.

It is found in the cell membrane. Upon bacterial lipopolysaccharide stimulation, mediates clathrin-dependent internalization of TLR4 in dendritic cells, resulting in activation of TICAM1-mediated signaling and subsequent IFNB1 production. May regulate B-cell antigen receptor mediated-signaling. The sequence is that of Raftlin-2 (RFTN2) from Pongo abelii (Sumatran orangutan).